A 38-amino-acid polypeptide reads, in one-letter code: Large ribosomal subunit protein bL36 (38 aa).

This sequence belongs to the bacterial ribosomal protein bL36 family.

The protein is Large ribosomal subunit protein bL36 (rpmJ) of Streptococcus pneumoniae serotype 4 (strain ATCC BAA-334 / TIGR4).